We begin with the raw amino-acid sequence, 364 residues long: MGISELEYLPQTTVNALLQYDNVRLATFRGYEYATDQWKKYLSDTKFFKVGEVDQIQCVFCRMKTSIRNEERIKKHVADCREGVVSAPQQQPPPPPSTSIGAVGGDPRPEDMNVPERGWDPPMSKDPKSTFLGKWPHSEYISIDSMVAEGFEFIGPGDRVQCRHCKVILRNWETTDIPSSEHERNAPRCPLVVQRYLTRMREDDERRDRELKEVQQRRKMDMNKAFSQDMSKLENRIASLKFWPGPIRDIEKVARTGFFYTGEKDMLTCYACACKLINWEKNDDPIKEHKINFPHCANMADVKWSDVGFSNDEECVICLGAKADTILKPCLHYSLCYGCSTQVQKCPLCRKKIEKRVQTTNVLQ.

Residues 24-89 (RLATFRGYEY…CREGVVSAPQ (66 aa)) form a BIR 1 repeat. The interval 83 to 126 (GVVSAPQQQPPPPPSTSIGAVGGDPRPEDMNVPERGWDPPMSKD) is disordered. Residues 117-126 (RGWDPPMSKD) are compositionally biased toward basic and acidic residues. BIR repeat units follow at residues 127–193 (PKST…PLVV) and 236–300 (RIAS…ANMA). The RING-type zinc-finger motif lies at 315–350 (CVICLGAKADTILKPCLHYSLCYGCSTQVQKCPLCR).

May act as an apoptosis inhibitor. The polypeptide is Putative apoptosis inhibitor ORF42 (Magallana gigas (Pacific oyster)).